A 268-amino-acid polypeptide reads, in one-letter code: Hydroxyethylthiazole kinase 2 (268 aa).

Residue Met-42 coordinates substrate. ATP is bound by residues Lys-117 and Thr-167. A substrate-binding site is contributed by Gly-194.

It belongs to the Thz kinase family. Requires Mg(2+) as cofactor.

The enzyme catalyses 5-(2-hydroxyethyl)-4-methylthiazole + ATP = 4-methyl-5-(2-phosphooxyethyl)-thiazole + ADP + H(+). It participates in cofactor biosynthesis; thiamine diphosphate biosynthesis; 4-methyl-5-(2-phosphoethyl)-thiazole from 5-(2-hydroxyethyl)-4-methylthiazole: step 1/1. In terms of biological role, catalyzes the phosphorylation of the hydroxyl group of 4-methyl-5-beta-hydroxyethylthiazole (THZ). The sequence is that of Hydroxyethylthiazole kinase 2 from Streptococcus pneumoniae (strain CGSP14).